Consider the following 335-residue polypeptide: Urokinase plasminogen activator surface receptor (335 aa).

The N-terminal stretch at 1-22 (MGHPLLLPLLLLLHTCVPASWG) is a signal peptide. UPAR/Ly6 domains are found at residues 23 to 114 (LRCM…RSRY), 115 to 213 (LECI…PQNG), and 214 to 305 (HQCY…YRKG). Cystine bridges form between C25/C46, C28/C34, and C39/C67. N-linked (GlcNAc...) asparagine glycosylation is present at N74. 11 disulfide bridges follow: C93/C98, C117/C144, C120/C127, C137/C169, C175/C192, C193/C198, C216/C244, C219/C227, C237/C263, C269/C287, and C288/C293. N-linked (GlcNAc...) asparagine glycans are attached at residues N184, N194, N222, N255, and N284. Residue G305 is the site of GPI-anchor amidated glycine attachment. Residues 306-335 (AAPQPGPAHLSLTITLLMTARLWGGTLLWT) constitute a propeptide, removed in mature form.

As to quaternary structure, monomer. Interacts (via the UPAR/Ly6 domains) with SRPX2. Interacts with MRC2. Interacts with FAP (seprase); the interaction occurs at the cell surface of invadopodia membrane. Interacts with SORL1 (via N-terminal ectodomain); this interaction decreases PLAUR internalization. The ternary complex composed of PLAUR-PLAU-SERPINE1 also interacts with SORL1.

It localises to the cell membrane. The protein localises to the cell projection. It is found in the invadopodium membrane. Acts as a receptor for urokinase plasminogen activator. Plays a role in localizing and promoting plasmin formation. Mediates the proteolysis-independent signal transduction activation effects of U-PA. It is subject to negative-feedback regulation by U-PA which cleaves it into an inactive form. This is Urokinase plasminogen activator surface receptor (PLAUR) from Macaca fascicularis (Crab-eating macaque).